Consider the following 342-residue polypeptide: Palmitoyltransferase PFA4 (342 aa).

At 1-8 (MITFSNPW) the chain is on the cytoplasmic side. A helical membrane pass occupies residues 9 to 29 (IGVIIPCIIIFTLSTFSAIYI). Residues 30 to 38 (LPHHVSNNE) are Lumenal-facing. Residues 39–59 (LTLFICASAMVWISYIIAIIV) form a helical membrane-spanning segment. Topologically, residues 60–124 (PPGSPPKNYT…GHRNMPHFMR (65 aa)) are cytoplasmic. In terms of domain architecture, DHHC spans 77-127 (MYCLKCKAYKPERTHHSKALGVCVLKMDHHCPWTNNTVGHRNMPHFMRFLV). Cys107 serves as the catalytic S-palmitoyl cysteine intermediate. Residues 125–145 (FLVWVDMTVGYLFIRLCIRIM) form a helical membrane-spanning segment. Residues 146 to 162 (KLWRDKHLPSYLFDKTE) lie on the Lumenal side of the membrane. Residues 163 to 183 (VILSIVFLPASFFVLFTVGIL) form a helical membrane-spanning segment. Over 184 to 342 (TIRVFVNMCN…ADFGVEHTDI (159 aa)) the chain is Cytoplasmic.

It belongs to the DHHC palmitoyltransferase family. PFA4 subfamily.

The protein localises to the endoplasmic reticulum membrane. It carries out the reaction L-cysteinyl-[protein] + hexadecanoyl-CoA = S-hexadecanoyl-L-cysteinyl-[protein] + CoA. Mediates the reversible addition of palmitate to target proteins, thereby regulating their membrane association and biological function. This Yarrowia lipolytica (strain CLIB 122 / E 150) (Yeast) protein is Palmitoyltransferase PFA4.